Here is a 172-residue protein sequence, read N- to C-terminus: Resuscitation-promoting factor RpfE (172 aa).

The N-terminal stretch at 1 to 28 (MKNARTTLIAAAIAGTLVTTSPAGIANA) is a signal peptide. The segment at 33–89 (LDPNAAAGPDAVGFDPNLPPAPDAAPVDTPPAPEDAGFDPNLPPPLAPDFLSPPAEE) is disordered. Residues 49-65 (NLPPAPDAAPVDTPPAP) are compositionally biased toward pro residues.

This sequence belongs to the transglycosylase family. Rpf subfamily. As to quaternary structure, interacts with RipA.

Factor that stimulates resuscitation of dormant cells. Has peptidoglycan (PG) hydrolytic activity. Active in the pM concentration range. Has little to no effect on actively-growing cells. PG fragments could either directly activate the resuscitation pathway of dormant bacteria or serve as a substrate for endogenous Rpf, resulting in low molecular weight products with resuscitation activity. Functionally, stimulates growth of stationary phase M.bovis (a slow-growing Mycobacterium), reduces the lag phase of diluted fast-growers M.smegmatis and Micrococcus luteus. Sequential gene disruption indicates RpfB and RpfE are higher than RpfD and RpfC in functional hierarchy. This chain is Resuscitation-promoting factor RpfE (rpfE), found in Mycobacterium tuberculosis (strain ATCC 25618 / H37Rv).